A 165-amino-acid polypeptide reads, in one-letter code: Nucleotide-binding protein Ccur92_01650 (165 aa).

The protein belongs to the YajQ family.

Functionally, nucleotide-binding protein. The polypeptide is Nucleotide-binding protein Ccur92_01650 (Campylobacter curvus (strain 525.92)).